A 260-amino-acid polypeptide reads, in one-letter code: 3-methyl-2-oxobutanoate hydroxymethyltransferase (260 aa).

Mg(2+) contacts are provided by Asp-44 and Asp-83. Residues 44-45 (DS), Asp-83, and Lys-113 each bind 3-methyl-2-oxobutanoate. Glu-115 contributes to the Mg(2+) binding site. Glu-183 serves as the catalytic Proton acceptor.

Belongs to the PanB family. As to quaternary structure, homodecamer; pentamer of dimers. Mg(2+) serves as cofactor.

The protein localises to the cytoplasm. The catalysed reaction is 3-methyl-2-oxobutanoate + (6R)-5,10-methylene-5,6,7,8-tetrahydrofolate + H2O = 2-dehydropantoate + (6S)-5,6,7,8-tetrahydrofolate. The protein operates within cofactor biosynthesis; (R)-pantothenate biosynthesis; (R)-pantoate from 3-methyl-2-oxobutanoate: step 1/2. In terms of biological role, catalyzes the reversible reaction in which hydroxymethyl group from 5,10-methylenetetrahydrofolate is transferred onto alpha-ketoisovalerate to form ketopantoate. The protein is 3-methyl-2-oxobutanoate hydroxymethyltransferase of Gloeobacter violaceus (strain ATCC 29082 / PCC 7421).